The following is a 345-amino-acid chain: Large ribosomal subunit protein uL4 (345 aa).

Ala2 carries the post-translational modification N-acetylalanine.

It belongs to the universal ribosomal protein uL4 family.

This is Large ribosomal subunit protein uL4 (rpl-4) from Caenorhabditis elegans.